We begin with the raw amino-acid sequence, 1407 residues long: MSPLLKSIIDIIEIFNQYASHDCDGAVLKKKDLKILLDREFGAVLQRPHDPETVDVMLELLDRDSDGLVGFDEFCLLIFKLAQAAYYALGQASGLDEEKRSHGEGKGRLLQNRRQEDQRRFELRDRQFEDEPERRRWQKQEQERELAEEEEQRKKRERFEQHYSRQYRDKEQRLQRQELEERRAEEEQLRRRKGRDAEEFIEEEQLRRREQQELKRELREEEQQRRERREQHERALQEEEEQLLRQRRWREEPREQQQLRRELEEIREREQRLEQEERREQQLRREQRLEQEERREQQLRRELEEIREREQRLEQEERREQRLEQEERREQQLKRELEEIREREQRLEQEERREQLLAEEVREQARERGESLTRRWQRQLESEAGARQSKVYSRPRRQEEQSLRQDQERRQRQERERELEEQARRQQQWQAEEESERRRQRLSARPSLRERQLRAEERQEQEQRFREEEEQRRERRQELQFLEEEEQLQRRERAQQLQEEDSFQEDRERRRRQQEQRPGQTWRWQLQEEAQRRRHTLYAKPGQQEQLREEEELQREKRRQEREREYREEEKLQREEDEKRRRQERERQYRELEELRQEEQLRDRKLREEEQLLQEREEERLRRQERERKLREEEQLLRQEEQELRQERERKLREEEQLLRREEQELRQERERKLREEEQLLQEREEERLRRQERARKLREEEQLLRQEEQELRQERERKLREEEQLLRREEQLLRQERDRKLREEEQLLQESEEERLRRQEREQQLRRERDRKFREEEQLLQEREEERLRRQERERKLREEEQLLQEREEERLRRQERERKLREEEQLLQEREEERLRRQERERKLREEEQLLRQEEQELRQERARKLREEEQLLRQEEQELRQERDRKLREEEQLLRQEEQELRQERDRKLREEEQLLQESEEERLRRQERERKLREEEQLLRREEQELRRERARKLREEEQLLQEREEERLRRQERARKLREEEQLLRREEQELRQERDRKFREEEQLLQEREEERLRRQERDRKFREEERQLRRQELEEQFRQERDRKFRLEEQIRQEKEEKQLRRQERDRKFREEEQQRRRQEREQQLRRERDRKFREEEQLLQEREEERLRRQERARKLREEEQLLRREEQLLRQERDRKFREEEQLLQESEEERLRRQERERKLREEEQLLQEREEERLRRQERARKLREEEQLLRQEEQELRQERARKLREEEQLLRQEEQELRQERDRKFREEEQLLRREEQELRRERDRKFREEEQLLQEREEERLRRQERARKLREEEEQLLFEEQEEQRLRQERDRRYRAEEQFAREEKSRRLERELRQEEEQRRRRERERKFREEQLRRQQEEEQRRRQLRERQFREDQSRRQVLEPGTRQFARVPVRSSPLYEYIQEQRSQYRP.

An S-100-like region spans residues 1–91 (MSPLLKSIID…AQAAYYALGQ (91 aa)). 2 EF-hand domains span residues 23-48 (CDGA…LQRP) and 49-84 (HDPE…LAQA). Positions 32, 62, 64, 66, and 73 each coordinate Ca(2+). Disordered regions lie at residues 148 to 172 (EEEE…DKEQ), 218 to 237 (LREE…RALQ), 362 to 471 (REQA…EEEQ), 486 to 587 (EQLQ…ERER), 1014 to 1033 (REEE…EEER), 1062 to 1082 (KEEK…EEQQ), and 1313 to 1407 (EQFA…QYRP). Basic and acidic residues-rich tracts occupy residues 362–381 (REQA…RQLE), 396–424 (RRQE…EQAR), 447–471 (SLRE…EEEQ), and 554–587 (QREK…ERER). The segment covering 1313–1376 (EQFAREEKSR…FREDQSRRQV (64 aa)) has biased composition (basic and acidic residues).

Belongs to the S100-fused protein family. Homodimer. Substrate of transglutaminase. Some 200 arginines are probably converted to citrullines by peptidylarginine deimidase. In terms of tissue distribution, found in the hard keratinizing tissues such as the inner root sheath (IRS) of hair follicles and medulla, and in the filiform papillae of dorsal tongue epithelium.

Functionally, intermediate filament-associated protein that associates in regular arrays with keratin intermediate filaments (KIF) of the inner root sheath cells of the hair follicle and the granular layer of the epidermis. It later becomes cross-linked to KIF by isodipeptide bonds. It may serve as scaffold protein, together with involucrin, in the organization of the cell envelope or even anchor the cell envelope to the KIF network. It may be involved in its own calcium-dependent postsynthetic processing during terminal differentiation. This chain is Trichohyalin (TCHH), found in Oryctolagus cuniculus (Rabbit).